A 156-amino-acid chain; its full sequence is Small ribosomal subunit protein uS7 (156 aa).

The protein belongs to the universal ribosomal protein uS7 family. In terms of assembly, part of the 30S ribosomal subunit. Contacts proteins S9 and S11.

Its function is as follows. One of the primary rRNA binding proteins, it binds directly to 16S rRNA where it nucleates assembly of the head domain of the 30S subunit. Is located at the subunit interface close to the decoding center, probably blocks exit of the E-site tRNA. This chain is Small ribosomal subunit protein uS7, found in Pseudomonas syringae pv. syringae (strain B728a).